An 802-amino-acid polypeptide reads, in one-letter code: Fibroblast growth factor receptor 4 (802 aa).

The first 21 residues, 1-21 (MRLLLALLGVLLSVPGPPVLS), serve as a signal peptide directing secretion. The 97-residue stretch at 22–118 (LEASEEVELE…VLQNLTLITG (97 aa)) folds into the Ig-like C2-type 1 domain. Residues 22–369 (LEASEEVELE…AAAPEARYTD (348 aa)) are Extracellular-facing. The cysteines at positions 57 and 101 are disulfide-linked. Asn-112 carries an N-linked (GlcNAc...) asparagine glycan. Positions 119–148 (DSLTSSNDDEDPKSHRDPSNRHSYPQQAPY) are disordered. Ig-like C2-type domains follow at residues 152-240 (PQRM…YLLD) and 249-349 (PILQ…AWLT). An intrachain disulfide couples Cys-172 to Cys-224. Asn-258, Asn-290, Asn-311, and Asn-322 each carry an N-linked (GlcNAc...) asparagine glycan. A disulfide bond links Cys-271 and Cys-333. A helical transmembrane segment spans residues 370–390 (IILYASGSLALAVLLLLAGLY). Tyr-390 is subject to Phosphotyrosine; in variant R-388. The Cytoplasmic segment spans residues 391–802 (RGQALHGRHP…SFPFGSGVQT (412 aa)). Residues 467–755 (LVLGKPLGEG…VLLAVSEEYL (289 aa)) form the Protein kinase domain. Residues 473–481 (LGEGCFGQV) and Lys-503 each bind ATP. Phosphoserine is present on Ser-573. The active-site Proton acceptor is the Asp-612. Residues Tyr-642, Tyr-643, and Tyr-754 each carry the phosphotyrosine; by autocatalysis modification.

Belongs to the protein kinase superfamily. Tyr protein kinase family. Fibroblast growth factor receptor subfamily. In terms of assembly, monomer. Homodimer after ligand binding. Interacts with FGF1, FGF2, FGF4, FGF6, FGF8, FGF9, FGF16, FGF17, FGF18, FGF19, FGF21 and FGF23 (in vitro). Binding affinity for FGF family members is enhanced by interactions between FGFs and heparan sulfate proteoglycans. Interacts with KLB; this strongly increases the affinity for FGF19 and FGF23. Affinity for FGF19 is strongly increased by KLB and sulfated glycosaminoglycans. KLB and KL both interact with the core-glycosylated FGFR4 in the endoplasmic reticulum and promote its degradation, so that only FGFR4 with fully mature N-glycans is expressed at the cell surface. Identified in a complex with NCAM1, CDH2, PLCG1, FRS2, SRC, SHC1, GAP43 and CTTN. Interacts with MMP14 and HIP1. Interacts with STAT3. N-glycosylated. Full maturation of the glycan chains in the Golgi is essential for high affinity interaction with FGF19. Post-translationally, ubiquitinated. Subject to proteasomal degradation when not fully glycosylated. In terms of processing, autophosphorylated. Binding of FGF family members together with heparan sulfate proteoglycan or heparin promotes receptor dimerization and autophosphorylation on tyrosine residues. Autophosphorylation occurs in trans between the two FGFR molecules present in the dimer. As to expression, expressed in gastrointestinal epithelial cells, pancreas, and gastric and pancreatic cancer cell lines.

It localises to the cell membrane. It is found in the endosome. The protein resides in the endoplasmic reticulum. The protein localises to the secreted. The catalysed reaction is L-tyrosyl-[protein] + ATP = O-phospho-L-tyrosyl-[protein] + ADP + H(+). Present in an inactive conformation in the absence of bound ligand. Ligand binding leads to dimerization and activation by autophosphorylation on tyrosine residues. In terms of biological role, tyrosine-protein kinase that acts as a cell-surface receptor for fibroblast growth factors and plays a role in the regulation of cell proliferation, differentiation and migration, and in regulation of lipid metabolism, bile acid biosynthesis, glucose uptake, vitamin D metabolism and phosphate homeostasis. Required for normal down-regulation of the expression of CYP7A1, the rate-limiting enzyme in bile acid synthesis, in response to FGF19. Phosphorylates PLCG1 and FRS2. Ligand binding leads to the activation of several signaling cascades. Activation of PLCG1 leads to the production of the cellular signaling molecules diacylglycerol and inositol 1,4,5-trisphosphate. Phosphorylation of FRS2 triggers recruitment of GRB2, GAB1, PIK3R1 and SOS1, and mediates activation of RAS, MAPK1/ERK2, MAPK3/ERK1 and the MAP kinase signaling pathway, as well as of the AKT1 signaling pathway. Promotes SRC-dependent phosphorylation of the matrix protease MMP14 and its lysosomal degradation. FGFR4 signaling is down-regulated by receptor internalization and degradation; MMP14 promotes internalization and degradation of FGFR4. Mutations that lead to constitutive kinase activation or impair normal FGFR4 inactivation lead to aberrant signaling. In Homo sapiens (Human), this protein is Fibroblast growth factor receptor 4 (FGFR4).